A 921-amino-acid polypeptide reads, in one-letter code: Isoleucine--tRNA ligase (921 aa).

The short motif at 57-67 (PYANGNIHVGT) is the 'HIGH' region element. E551 serves as a coordination point for L-isoleucyl-5'-AMP. The 'KMSKS' region signature appears at 592–596 (KMSKS). ATP is bound at residue K595. C885, C888, C905, and C908 together coordinate Zn(2+).

The protein belongs to the class-I aminoacyl-tRNA synthetase family. IleS type 1 subfamily. Monomer. Zn(2+) is required as a cofactor.

Its subcellular location is the cytoplasm. It catalyses the reaction tRNA(Ile) + L-isoleucine + ATP = L-isoleucyl-tRNA(Ile) + AMP + diphosphate. In terms of biological role, catalyzes the attachment of isoleucine to tRNA(Ile). As IleRS can inadvertently accommodate and process structurally similar amino acids such as valine, to avoid such errors it has two additional distinct tRNA(Ile)-dependent editing activities. One activity is designated as 'pretransfer' editing and involves the hydrolysis of activated Val-AMP. The other activity is designated 'posttransfer' editing and involves deacylation of mischarged Val-tRNA(Ile). In Kosmotoga olearia (strain ATCC BAA-1733 / DSM 21960 / TBF 19.5.1), this protein is Isoleucine--tRNA ligase.